A 125-amino-acid chain; its full sequence is Upsalin (125 aa).

A signal peptide spans 1–16 (MFPTHVLLIVIACVTA).

Weakly glycosylated. In terms of tissue distribution, expressed at highest levels in mantle, followed by adductor muscle. Found in the nacreous shell layer (at protein level).

The protein localises to the secreted. The sequence is that of Upsalin from Unio pictorum (Painter's mussel).